We begin with the raw amino-acid sequence, 775 residues long: Kazrin (775 aa).

The segment at 38–66 (AELSGGGGPGPGPGAAASASAAGDSAATN) is disordered. Over residues 51–64 (GAAASASAAGDSAA) the composition is skewed to low complexity. Residues 74–256 (AQVLLREEVS…LATLTKDVPK (183 aa)) are a coiled coil. The interaction with PPL stretch occupies residues 174–333 (RDFIRNYEQH…SAAEGDRSST (160 aa)). The tract at residues 290 to 427 (QQTLYHSHPP…QSLSLSEGEE (138 aa)) is disordered. Ser352, Ser367, and Ser387 each carry phosphoserine. A compositionally biased stretch (polar residues) spans 411-422 (SQCSPTRQSLSL). 3 SAM domains span residues 446–511 (WKAG…YRDA), 524–588 (DHHW…LYQV), and 612–679 (WTNQ…SAVF). 2 disordered regions span residues 688-715 (REAE…SSGL) and 729-762 (RGFS…LEQC). Over residues 732–742 (SSKDPDFHDDY) the composition is skewed to basic and acidic residues.

It belongs to the kazrin family. As to quaternary structure, isoform 2, isoform 3 and isoform 4 interact with PPL N-terminus. As to expression, isoform 2, isoform 3 and isoform 4 are expressed in several cell lines including keratinocytes and bladder and epidermoid carcinoma (at protein level). Isoform 2, isoform 3 and isoform 4 are expressed in hair follicle and interfollicular epidermis (at protein level).

It localises to the cytoplasm. Its subcellular location is the cytoskeleton. It is found in the cell junction. The protein localises to the desmosome. The protein resides in the nucleus. In terms of biological role, component of the cornified envelope of keratinocytes. May be involved in the interplay between adherens junctions and desmosomes. The function in the nucleus is not known. The protein is Kazrin of Homo sapiens (Human).